The chain runs to 184 residues: Copper transporter 6 (184 aa).

The span at 1–25 shows a compositional bias: low complexity; the sequence is MRGMGDDGMGPMAMAPPRSGHATAA. Positions 1–27 are disordered; sequence MRGMGDDGMGPMAMAPPRSGHATAAAP. Helical transmembrane passes span 64–84 and 124–144; these read YALC…LSVL and MAYL…LAAV.

It belongs to the copper transporter (Ctr) (TC 1.A.56) family. SLC31A subfamily.

It is found in the membrane. Functionally, involved in the transport of copper. This is Copper transporter 6 (COPT6) from Oryza sativa subsp. japonica (Rice).